The sequence spans 253 residues: Ipsdienol dehydrogenase (253 aa).

Residues 12–40 and Asp63 each bind NAD(+); that span reads VTGG…FSRN. Ser149 provides a ligand contact to substrate. The active-site Proton acceptor is Tyr162. An NAD(+)-binding site is contributed by Lys166.

It belongs to the short-chain dehydrogenases/reductases (SDR) family. Specifically expressed in male midguts. Expressed at higher level in the anterior midgut of fed males.

The protein localises to the cytoplasm. Its subcellular location is the cytosol. It catalyses the reaction (4R)-ipsdienol + NADP(+) = ipsdienone + NADPH + H(+). It carries out the reaction (4R)-ipsdienol + NAD(+) = ipsdienone + NADH + H(+). Its function is as follows. Catalyzes the oxidation of racemic ipsdienol and (4R)-(-)-ipsdienol to form ipsdienone (2-methyl-6-methylene-2,7-octadien-4-one), an intermediate in the biosynthesis of pheromonal ipsdienol in male pine engraver beetles. In contrast, (4S)-(+)-ipsdienol is not a substrate. The protein is Ipsdienol dehydrogenase of Ips pini (Pine engraver beetle).